The chain runs to 241 residues: Small ribosomal subunit protein uS2 (241 aa).

It belongs to the universal ribosomal protein uS2 family.

The polypeptide is Small ribosomal subunit protein uS2 (Escherichia coli O127:H6 (strain E2348/69 / EPEC)).